The sequence spans 902 residues: MAGRSCLELGLFCWVLLAVPVGPQPASSVPGAPLTTLTPPPQSEASMLSLNLGLNFKFHLRGPAAVWGNPVTETHPLSPGLGQESEEEEEGDLRTDPLWELLVGSPGNYLPEWGSAEGSFTPWASSLPPESTSRLSGPTKRPTAHSQPRMGTVTWATALTATAPPTSAPRPHQSELELKFDVALRAGAAPTLGHRSLPLLPSLRASLAEIAGRLGPFGFFGTTVSPLRNFSRQSYPGTTAHPSFAFEVSDSPGLFGTTGSRPPPLLERKFSSPSLLDSVASPSSASVKTTPVQQDPTVSTSGPDELSPASFGNPSTQPGCEPGSCSEPELLDDLGQPPASPLPLFFLTLEADWAEARARWGLAWEAHVYGAGALFGLVALLALLALALLPWRCPPGAPCLALLDLLLLSAGTTRAFPLFYDAYGHRDRLPTLVWLLLQDLPLPCLAAGLGLACLLLARPRTPRCPAGLAALLLLGLGLAAAAALGSAVHRPLRPLRLASRGLHAFLAAFLSGLLLALSCWGGRRRRAGAPLGGAGFKGATPVPQVRSPFAPRESWRRAARTAPVAGTFGLLSGALQGYEVLHALGYGSQAGLEGPWPWWAFQLGLRLGEVGVALPLALLGLYPALCSPRVPRRCWAKLFRLSPGHAAPLLPGGWVPGIPDKEPLGSAIARGDAELLQLCALAGPGPDLLLQGGGCRGFEGAGANPTQSTASSPSSDCTVDFRPPSPINLRRSIEEALCSEALLAPGLFQGPAFGEALPGLGLYRTISLGNKIGAGPSEKSENVPGSPAPPELPSPGAWPPGSSASSGSLCGLSRDSSSMLLCSSPDRPPRCPLVCVLSPPRPSESSPSLPASGSYQALSPPSRDSPEHASELQAEEALLQEQFLDACRQIDELSMGSDTIDL.

Residues 1–18 form the signal peptide; that stretch reads MAGRSCLELGLFCWVLLA. 3 disordered regions span residues 72-92, 121-149, and 281-333; these read TETHPLSPGLGQESEEEEEGD, TPWASSLPPESTSRLSGPTKRPTAHSQPR, and SPSS…LLDD. Composition is skewed to polar residues over residues 122 to 136 and 281 to 302; these read PWASSLPPESTSRLS and SPSSASVKTTPVQQDPTVSTSG. The next 5 helical transmembrane spans lie at 371 to 391, 393 to 413, 432 to 452, 468 to 488, and 501 to 521; these read AGALFGLVALLALLALALLPW, CPPGAPCLALLDLLLLSAGTT, LVWLLLQDLPLPCLAAGLGLA, LAALLLLGLGLAAAAALGSAV, and GLHAFLAAFLSGLLLALSCWG. S642 carries the phosphoserine modification. 3 disordered regions span residues 701–723, 774–811, and 839–872; these read AGANPTQSTASSPSSDCTVDFRP, AGPSEKSENVPGSPAPPELPSPGAWPPGSSASSGSLCG, and PPRPSESSPSLPASGSYQALSPPSRDSPEHASEL. The segment covering 704–717 has biased composition (polar residues); that stretch reads NPTQSTASSPSSDC. Pro residues predominate over residues 786–798; sequence SPAPPELPSPGAW. Low complexity-rich tracts occupy residues 799–811 and 843–854; these read PPGSSASSGSLCG and SESSPSLPASGS.

It localises to the membrane. This is Proline-rich transmembrane protein 4 (Prrt4) from Mus musculus (Mouse).